A 428-amino-acid polypeptide reads, in one-letter code: Somatostatin receptor type 3 (428 aa).

The Extracellular portion of the chain corresponds to 1-45; it reads MAAVTYPSSVPTTLDPGNASSAWPLDTSLGNASAGTSLAGLAVSG. N18 and N31 each carry an N-linked (GlcNAc...) asparagine glycan. Residues 46–71 traverse the membrane as a helical segment; that stretch reads ILISLVYLVVCVVGLLGNSLVIYVVL. The Cytoplasmic segment spans residues 72 to 81; sequence RHTSSPSVTS. A helical membrane pass occupies residues 82 to 103; it reads VYILNLALADELFMLGLPFLAA. Residues 104–118 lie on the Extracellular side of the membrane; the sequence is QNALSYWPFGSLMCR. The cysteines at positions 117 and 192 are disulfide-linked. Residues 119-140 traverse the membrane as a helical segment; sequence LVMAVDGINQFTSIFCLTVMSV. The Cytoplasmic segment spans residues 141 to 162; sequence DRYLAVVHPTRSARWRTAPVAR. Residues 163–182 form a helical membrane-spanning segment; it reads MVSAAVWVASAVVVLPVVVF. Residues 183 to 206 are Extracellular-facing; it reads SGVPRGMSTCHMQWPEPAAAWRTA. The chain crosses the membrane as a helical span at residues 207–232; sequence FIIYTAALGFFGPLLVICLCYLLIVV. Over 233–266 the chain is Cytoplasmic; the sequence is KVRSTTRRVRAPSCQWVQAPACQRRRRSERRVTR. Residues 267–288 traverse the membrane as a helical segment; it reads MVVAVVALFVLCWMPFYLLNIV. Topologically, residues 289-302 are extracellular; the sequence is NVVCPLPEEPAFFG. The chain crosses the membrane as a helical span at residues 303–325; that stretch reads LYFLVVALPYANSCANPILYGFL. Topologically, residues 326–428 are cytoplasmic; it reads SYRFKQGFRR…GDKASTLSHL (103 aa). A phosphoserine mark is found at S341, S346, and S351. The tract at residues 343–428 is disordered; it reads RVRSQEPGSG…GDKASTLSHL (86 aa). At T357 the chain carries Phosphothreonine. Acidic residues predominate over residues 357-370; it reads TEEEEDEEEEERRE. The span at 385–412 shows a compositional bias: polar residues; the sequence is RLSQIAQPGPSGQQQRPCTGTAKEQQLL.

This sequence belongs to the G-protein coupled receptor 1 family. In terms of assembly, homodimer and heterodimer with SSTR2. Heterodimerization with SSTR2 inactivates SSTR3 receptor function. Post-translationally, phosphorylated. Phosphorylation increases upon somatostatin binding. As to expression, densely expressed in cerebellum and at moderate levels in the amygdala, cortex, striatum, spleen, liver and pituitary.

The protein localises to the cell membrane. In terms of biological role, receptor for somatostatin-14 and -28. This receptor is coupled via pertussis toxin sensitive G proteins to inhibition of adenylyl cyclase. The chain is Somatostatin receptor type 3 (Sstr3) from Rattus norvegicus (Rat).